A 155-amino-acid chain; its full sequence is MRRRKAPVRPVLPDPVYGSKVLTKFINAVMLDGKKSTAQKVMYSALERIESKTGEKGIEVFNKAMDNIKPVMEVKSRRVGGATYQVPIEVRPARQQSLGIRWIVEAARKRNERTMMERLSNELMDAATEKGSAFKKKEDTYKMAEANKAFAHYRW.

The protein belongs to the universal ribosomal protein uS7 family. In terms of assembly, part of the 30S ribosomal subunit. Contacts proteins S9 and S11.

Functionally, one of the primary rRNA binding proteins, it binds directly to 16S rRNA where it nucleates assembly of the head domain of the 30S subunit. Is located at the subunit interface close to the decoding center, probably blocks exit of the E-site tRNA. The chain is Small ribosomal subunit protein uS7 from Sulfurovum sp. (strain NBC37-1).